Here is a 347-residue protein sequence, read N- to C-terminus: Holliday junction branch migration complex subunit RuvB (347 aa).

The large ATPase domain (RuvB-L) stretch occupies residues Met-1–Tyr-180. Residues Leu-19, Arg-20, Gly-61, Lys-64, Thr-65, Thr-66, Glu-127 to Phe-129, Arg-170, Tyr-180, and Arg-217 contribute to the ATP site. Thr-65 serves as a coordination point for Mg(2+). The small ATPAse domain (RuvB-S) stretch occupies residues Glu-181 to Glu-251. Residues Arg-254 to Glu-347 form a head domain (RuvB-H) region. DNA contacts are provided by Arg-290, Arg-309, and Arg-314.

The protein belongs to the RuvB family. Homohexamer. Forms an RuvA(8)-RuvB(12)-Holliday junction (HJ) complex. HJ DNA is sandwiched between 2 RuvA tetramers; dsDNA enters through RuvA and exits via RuvB. An RuvB hexamer assembles on each DNA strand where it exits the tetramer. Each RuvB hexamer is contacted by two RuvA subunits (via domain III) on 2 adjacent RuvB subunits; this complex drives branch migration. In the full resolvosome a probable DNA-RuvA(4)-RuvB(12)-RuvC(2) complex forms which resolves the HJ.

It localises to the cytoplasm. The catalysed reaction is ATP + H2O = ADP + phosphate + H(+). In terms of biological role, the RuvA-RuvB-RuvC complex processes Holliday junction (HJ) DNA during genetic recombination and DNA repair, while the RuvA-RuvB complex plays an important role in the rescue of blocked DNA replication forks via replication fork reversal (RFR). RuvA specifically binds to HJ cruciform DNA, conferring on it an open structure. The RuvB hexamer acts as an ATP-dependent pump, pulling dsDNA into and through the RuvAB complex. RuvB forms 2 homohexamers on either side of HJ DNA bound by 1 or 2 RuvA tetramers; 4 subunits per hexamer contact DNA at a time. Coordinated motions by a converter formed by DNA-disengaged RuvB subunits stimulates ATP hydrolysis and nucleotide exchange. Immobilization of the converter enables RuvB to convert the ATP-contained energy into a lever motion, pulling 2 nucleotides of DNA out of the RuvA tetramer per ATP hydrolyzed, thus driving DNA branch migration. The RuvB motors rotate together with the DNA substrate, which together with the progressing nucleotide cycle form the mechanistic basis for DNA recombination by continuous HJ branch migration. Branch migration allows RuvC to scan DNA until it finds its consensus sequence, where it cleaves and resolves cruciform DNA. The sequence is that of Holliday junction branch migration complex subunit RuvB from Paramagnetospirillum magneticum (strain ATCC 700264 / AMB-1) (Magnetospirillum magneticum).